Here is a 97-residue protein sequence, read N- to C-terminus: Co-chaperonin GroES (97 aa).

It belongs to the GroES chaperonin family. Heptamer of 7 subunits arranged in a ring. Interacts with the chaperonin GroEL.

The protein resides in the cytoplasm. Functionally, together with the chaperonin GroEL, plays an essential role in assisting protein folding. The GroEL-GroES system forms a nano-cage that allows encapsulation of the non-native substrate proteins and provides a physical environment optimized to promote and accelerate protein folding. GroES binds to the apical surface of the GroEL ring, thereby capping the opening of the GroEL channel. In Enterobacter sp. (strain 638), this protein is Co-chaperonin GroES.